A 490-amino-acid chain; its full sequence is Dual specificity protein kinase CLK3 (490 aa).

Residue Y7 is modified to Phosphotyrosine. A phosphoserine mark is found at S9, S49, S51, S67, S76, and S78. A disordered region spans residues 22-138 (RRRSYSREHE…SKRSSRSVED (117 aa)). 2 stretches are compositionally biased toward basic and acidic residues: residues 26-56 (YSRE…DRLP) and 63-76 (EHRD…EDRS). The segment covering 103–116 (TRKHAHHCHKRRTR) has biased composition (basic residues). Residues 117–130 (SCSSASSRSQQSSK) show a composition bias toward low complexity. S135 bears the Phosphoserine mark. In terms of domain architecture, Protein kinase spans 156–472 (YEIVGNLGEG…LAEALLHPFF (317 aa)). ATP is bound by residues 162 to 170 (LGEGTFGKV) and K186. D283 functions as the Proton acceptor in the catalytic mechanism.

It belongs to the protein kinase superfamily. CMGC Ser/Thr protein kinase family. Lammer subfamily. Autophosphorylates on all three types of residues.

Its subcellular location is the nucleus. It localises to the cytoplasm. It is found in the cytoplasmic vesicle. The protein localises to the secretory vesicle. The protein resides in the acrosome. It catalyses the reaction L-seryl-[protein] + ATP = O-phospho-L-seryl-[protein] + ADP + H(+). The enzyme catalyses L-threonyl-[protein] + ATP = O-phospho-L-threonyl-[protein] + ADP + H(+). It carries out the reaction L-tyrosyl-[protein] + ATP = O-phospho-L-tyrosyl-[protein] + ADP + H(+). Its activity is regulated as follows. Leucettine L41 inhibits its kinase activity and affects the regulation of alternative splicing mediated by phosphorylation of SR proteins. Its function is as follows. Dual specificity kinase acting on both serine/threonine and tyrosine-containing substrates. Phosphorylates serine- and arginine-rich (SR) proteins of the spliceosomal complex. May be a constituent of a network of regulatory mechanisms that enable SR proteins to control RNA splicing and can cause redistribution of SR proteins from speckles to a diffuse nucleoplasmic distribution. Phosphorylates SRSF1 and SRSF3. Regulates the alternative splicing of tissue factor (F3) pre-mRNA in endothelial cells. In Bos taurus (Bovine), this protein is Dual specificity protein kinase CLK3 (CLK3).